A 339-amino-acid polypeptide reads, in one-letter code: Serpentine receptor class alpha-21 (339 aa).

Transmembrane regions (helical) follow at residues 30 to 50 (FNFLFITTVILLSYCFTWLAI), 150 to 170 (FIAVSLLVLQLLLTLVSFYIA), 199 to 219 (VRTVVMVCCLVVTGFIYYLSV), 250 to 270 (ILIVLKLFCNMLSSIGINLLL), and 282 to 302 (VLVALFLPGVTYANLCLPLVI).

This sequence belongs to the nematode receptor-like protein sra family.

It localises to the membrane. This is Serpentine receptor class alpha-21 (sra-21) from Caenorhabditis elegans.